The following is a 323-amino-acid chain: Methenyltetrahydromethanopterin cyclohydrolase (323 aa).

The protein belongs to the MCH family.

It is found in the cytoplasm. The enzyme catalyses 5,10-methenyl-5,6,7,8-tetrahydromethanopterin + H2O = N(5)-formyl-5,6,7,8-tetrahydromethanopterin + H(+). Its pathway is one-carbon metabolism; methanogenesis from CO(2); 5,10-methenyl-5,6,7,8-tetrahydromethanopterin from CO(2): step 3/3. In terms of biological role, catalyzes the reversible interconversion of 5-formyl-H(4)MPT to methenyl-H(4)MPT(+). The polypeptide is Methenyltetrahydromethanopterin cyclohydrolase (mch) (Methanocaldococcus jannaschii (strain ATCC 43067 / DSM 2661 / JAL-1 / JCM 10045 / NBRC 100440) (Methanococcus jannaschii)).